The primary structure comprises 444 residues: Endothelin-3 receptor (444 aa).

A signal peptide spans 1–18 (MATVILFVAWMACLMVGV). Over 19–88 (CYQEFQTQQN…SRAKIRHAFK (70 aa)) the chain is Extracellular. Residue N60 is glycosylated (N-linked (GlcNAc...) asparagine). Residues 89 to 113 (YVTTILSCVIFLVGIVGNSTLLRII) traverse the membrane as a helical segment. At 114–124 (YKNKCMRNGPN) the chain is on the cytoplasmic side. The helical transmembrane segment at 125-145 (VLIASLALGDLFYILIAIPII) threads the bilayer. The Extracellular segment spans residues 146–161 (SISFWLSTGHSEYIYQ). The chain crosses the membrane as a helical span at residues 162–180 (LVHLYRARVYSLSLCALSI). The Cytoplasmic portion of the chain corresponds to 181 to 201 (DRYRAVASWNRIRSIGIPVRK). Residues 202-226 (AIELTLIWAVAIIVAVPEAIAFNLV) traverse the membrane as a helical segment. Over 227-254 (ELDFRGQTILVCMLPMEQTSDFMRFYQE) the chain is Extracellular. The helical transmembrane segment at 255–279 (VKVWWLFGFYFCLPLACTGVFYTLM) threads the bilayer. At 280–307 (SCEMLSIKNGMRIALNDHMKQRREVAKT) the chain is on the cytoplasmic side. Residues 308–328 (VFCLVVIFALCWLPLHVSSIF) form a helical membrane-spanning segment. Residues 329-365 (VRLSATVKRACILKNKRSCIMAEIQTGVNYQLLMVMN) lie on the Extracellular side of the membrane. The chain crosses the membrane as a helical span at residues 366-386 (YTGINMASLNSCIGPVALYFV). At 387-444 (SRKFKNCFQSCLCCWCHRPTLTITPMDEKGSGGKWKANGHDLDLDRSSSRLSNKYSSS) the chain is on the cytoplasmic side. Residues 416-444 (GSGGKWKANGHDLDLDRSSSRLSNKYSSS) are disordered. Residues 424–434 (NGHDLDLDRSS) show a composition bias toward basic and acidic residues. Low complexity predominate over residues 435–444 (SRLSNKYSSS).

It belongs to the G-protein coupled receptor 1 family. Endothelin receptor subfamily.

Its subcellular location is the cell membrane. In terms of biological role, receptor for endothelin-3. Mediates its action by association with G proteins that activate a phosphatidylinositol-calcium second messenger system. The protein is Endothelin-3 receptor of Xenopus laevis (African clawed frog).